The primary structure comprises 329 residues: Ornithine carbamoyltransferase (329 aa).

Residues 51-54 (STRT), glutamine 78, arginine 102, and 129-132 (HPVQ) contribute to the carbamoyl phosphate site. Residues asparagine 174, aspartate 238, and 242–243 (SM) contribute to the L-ornithine site. Carbamoyl phosphate is bound by residues 278–279 (CL) and arginine 306.

It belongs to the aspartate/ornithine carbamoyltransferase superfamily. OTCase family.

The protein localises to the cytoplasm. The catalysed reaction is carbamoyl phosphate + L-ornithine = L-citrulline + phosphate + H(+). The protein operates within amino-acid biosynthesis; L-arginine biosynthesis; L-arginine from L-ornithine and carbamoyl phosphate: step 1/3. In terms of biological role, reversibly catalyzes the transfer of the carbamoyl group from carbamoyl phosphate (CP) to the N(epsilon) atom of ornithine (ORN) to produce L-citrulline. The sequence is that of Ornithine carbamoyltransferase from Helicobacter hepaticus (strain ATCC 51449 / 3B1).